We begin with the raw amino-acid sequence, 182 residues long: Large ribosomal subunit protein uL22 (182 aa).

The tract at residues 155–182 (SGVDGAKQGKKKKKTDGVEKATTKRQKQ) is disordered.

It belongs to the universal ribosomal protein uL22 family.

This is Large ribosomal subunit protein uL22 (RpL17) from Carabus granulatus (Ground beetle).